Here is a 133-residue protein sequence, read N- to C-terminus: U-scoloptoxin(05)-Sa1a (133 aa).

A signal peptide spans 1–24 (MPSLCIIALFGTLTFYTLIPSIHT).

Belongs to the scoloptoxin-05 family. In terms of processing, contains 5 disulfide bonds. Expressed by the venom gland.

It is found in the secreted. This chain is U-scoloptoxin(05)-Sa1a, found in Scolopendra alternans (Florida Keys giant centipede).